A 4599-amino-acid chain; its full sequence is Low-density lipoprotein receptor-related protein 1B (4599 aa).

The N-terminal stretch at 1–20 is a signal peptide; that stretch reads MSEFLLALLTLSGLLPIARV. At 25 to 4444 the chain is on the extracellular side; it reads ADRDQQLCDP…KSDHISTRSI (4420 aa). LDL-receptor class A domains are found at residues 31-70 and 76-114; these read LCDPGEFLCHDHVTCVSQSWLCDGDPDCPDDSDESLDTCP and KCPLNHIACLGTNKCVHLSQLCNGVLDCPDGYDEGVHCQ. Cystine bridges form between C32-C45, C39-C58, C52-C69, C77-C90, C84-C103, C97-C113, C120-C129, C125-C138, C140-C153, C159-C169, C165-C178, and C180-C193. Residues 116–154 enclose the EGF-like 1 domain; sequence LLSNCQQLNCQYKCTMVRNSTRCYCEDGFEITEDGRSCK. N-linked (GlcNAc...) asparagine glycosylation is present at N134. Residues 155–194 form the EGF-like 2; calcium-binding domain; sequence DQDECAVYGTCSQTCRNTHGSYTCSCVEGYLMQPDNRSCK. 4 N-linked (GlcNAc...) asparagine glycosylation sites follow: N190, N220, N313, and N360. 3 LDL-receptor class B repeats span residues 295 to 337, 338 to 381, and 382 to 425; these read RNLY…DPIA, GKLF…DLVN, and KLVY…FEDY. An N-linked (GlcNAc...) asparagine glycan is attached at N443. Positions 471–517 constitute an EGF-like 3 domain; it reads RSHACEVDPYGMPGGCSHICLLSSSYKTRTCRCRTGFNLGSDGRSCK. LDL-receptor class B repeat units lie at residues 568–610, 611–656, 657–706, and 707–750; these read NYIY…DWIG, NNLY…DPVN, GWMY…DFHT, and NTLY…HGNY. N725 and N758 each carry an N-linked (GlcNAc...) asparagine glycan. The region spanning 794–834 is the EGF-like 4 domain; sequence GDNMCRVNNGGCSTLCLAIPGGRVCACADNQLLDENGTTCT. 6 cysteine pairs are disulfide-bonded: C798-C809, C805-C818, C820-C833, C845-C857, C852-C870, and C864-C881. An N-linked (GlcNAc...) asparagine glycan is attached at N829. The LDL-receptor class A 3 domain maps to 844–882; sequence ICKAGEFRCKNRHCIQARWKCDGDDDCLDGSDEDSVNCF. The N-linked (GlcNAc...) asparagine glycan is linked to N883. LDL-receptor class A domains are found at residues 885–923, 926–963, 966–1003, 1005–1043, 1052–1089, 1094–1132, and 1135–1174; these read SCPDDQFKCQNNRCIPKRWLCDGANDCGSNEDESNQTCT, TCQVDQFSCGNGRCIPRAWLCDREDDCGDQTDEMASCE, TCEPLTQFVCKSGRCISSKWHCDSDDDCGDGSDEVGCV, SCFDNQFRCSSGRCIPGHWACDGDNDCGDFSDEAQINCT, GCNGNEFQCHPDGNCVPDLWRCDGEKDCEDGSDEKGCN, LCDHKTKFSCWSTGRCINKAWVCDGDIDCEDQSDEDDCD, and LCGPPKHPCANDTSVCLQPEKLCNGKKDCPDGSDEGYLCD. 15 disulfide bridges follow: C886–C898, C893–C911, C905–C922, C927–C939, C934–C952, C946–C962, C967–C980, C975–C993, C987–C1002, C1006–C1018, C1013–C1031, C1025–C1042, C1053–C1066, C1060–C1079, and C1073–C1088. A glycan (N-linked (GlcNAc...) asparagine) is linked at N919. N1041 carries N-linked (GlcNAc...) asparagine glycosylation. N-linked (GlcNAc...) asparagine glycosylation occurs at N1089. Intrachain disulfides connect C1095–C1109, C1103–C1122, C1116–C1131, C1136–C1150, C1143–C1163, and C1157–C1173. N1145 is a glycosylation site (N-linked (GlcNAc...) asparagine). EGF-like domains lie at 1174–1213 and 1214–1253; these read DECSLNNGGCSNHCSVVPGRGIVCSCPEGLQLNKDNKTCE and IVDYCSNHLKCSQVCEQHKHTVKCSCYEGWKLDVDGESCT. A glycan (N-linked (GlcNAc...) asparagine) is linked at N1209. N-linked (GlcNAc...) asparagine glycosylation occurs at N1298. 5 LDL-receptor class B repeats span residues 1300-1346, 1347-1389, 1390-1436, 1437-1480, and 1481-1522; these read SLLY…DWIA, GNIY…DPRY, GILF…DHFE, KRIV…LYGS, and EVYW…YHPS. N1502, N1549, and N1636 each carry an N-linked (GlcNAc...) asparagine glycan. An EGF-like 7 domain is found at 1527 to 1570; that stretch reads APNPCAANDGKGPCSHMCLINHNRSAACACPHLMKLSSDKKTCY. 4 LDL-receptor class B repeats span residues 1618 to 1660, 1661 to 1704, 1705 to 1744, and 1745 to 1787; these read ERLY…DWVS, RNLY…HPVR, GKLYWTDGNTINMANMDGSNSKILFQNQKEPVGLSIDYVE, and NKLY…TIMD. N1754 and N1816 each carry an N-linked (GlcNAc...) asparagine glycan. The region spanning 1834–1875 is the EGF-like 8 domain; it reads GSNSCQLNNGGCSQLCLPTSETTRTCMCTVGYYLQKNRMSCQ. 3 cysteine pairs are disulfide-bonded: C1838/C1849, C1845/C1859, and C1861/C1874. N1921 is a glycosylation site (N-linked (GlcNAc...) asparagine). 4 LDL-receptor class B repeats span residues 1922–1964, 1965–2007, 2008–2051, and 2052–2095; these read DTIY…DWIA, GNIY…HPEK, GLLF…DYEE, and NKLY…FGAY. The N-linked (GlcNAc...) asparagine glycan is linked to N1983. The N-linked (GlcNAc...) asparagine glycan is linked to N2105. The EGF-like 9 domain maps to 2143–2183; it reads GTNVCARDNGGCKQLCLYRGNSRRTCACAHGYLAEDGVTCL. Intrachain disulfides connect C2147–C2158, C2154–C2168, and C2170–C2182. LDL-receptor class B repeat units lie at residues 2239-2280, 2281-2329, 2330-2374, 2375-2416, and 2417-2459; these read NRIF…HRAW, DTLY…DECQ, NLMF…DYRA, EKLY…VYDN, and YIFW…VAND. N2458, N2488, and N2507 each carry an N-linked (GlcNAc...) asparagine glycan. An EGF-like 10 domain is found at 2464 to 2504; that stretch reads ELSPCALLNGGCHDLCLLTPNGRVNCSCRGDRILLEDNRCV. The 40-residue stretch at 2509-2548 folds into the LDL-receptor class A 11 domain; the sequence is SCNAYSEFECGNGECIDYQLTCDGIPHCKDKSDEKLLYCE. Disulfide bonds link C2510–C2523, C2518–C2536, and C2530–C2547. A glycan (N-linked (GlcNAc...) asparagine) is linked at N2549. 6 consecutive LDL-receptor class A domains span residues 2551-2587, 2590-2626, 2629-2675, 2681-2717, 2719-2757, and 2760-2800; these read SCRRGFKPCYNRRCIPHGKLCDGENDCGDNSDELDCK, TCATVEFRCADGTCIPRSARCNQNIDCADASDEKNCN, DCTH…LKCP, KCEENYFSCPSGRCILNTWICDGQKDCEDGRDEFHCD, SCSWNQFACSAQKCISKHWICDGEDDCGDGLDESDSICG, and TCAA…AGCA. Intrachain disulfides connect C2552-C2564, C2559-C2577, C2571-C2586, C2591-C2603, C2598-C2616, and C2610-C2625. 2 N-linked (GlcNAc...) asparagine glycosylation sites follow: N2626 and N2647. 12 disulfides stabilise this stretch: C2630-C2652, C2646-C2665, C2659-C2674, C2682-C2694, C2689-C2707, C2701-C2716, C2720-C2732, C2727-C2745, C2739-C2756, C2761-C2774, C2768-C2787, and C2781-C2799. The N-linked (GlcNAc...) asparagine glycan is linked to N2802. LDL-receptor class A domains are found at residues 2804-2841, 2844-2885, and 2890-2926; these read TCDENAFMCHNKVCIPKQFVCDHDDDCGDGSDESPQCG, QCGT…PKCK, and SCNSSFFMCKNGRCIPSGGLCDNKDDCGDGSDERNCH. 15 cysteine pairs are disulfide-bonded: C2805–C2817, C2812–C2830, C2824–C2840, C2845–C2857, C2852–C2871, C2865–C2884, C2891–C2903, C2898–C2916, C2910–C2925, C2930–C2942, C2938–C2951, C2953–C2966, C2972–C2982, C2978–C2991, and C2993–C3007. An N-linked (GlcNAc...) asparagine glycan is attached at N2892. One can recognise an EGF-like 11 domain in the interval 2927-2967; it reads INECLSKKVSGCSQDCQDLPVSYKCKCWPGFQLKDDGKTCV. Residues 2968 to 3008 enclose the EGF-like 12; calcium-binding domain; it reads DIDECSSGFPCSQQCINTYGTYKCLCTDGYEIQPDNPNGCK. Residues N3034, N3066, and N3076 are each glycosylated (N-linked (GlcNAc...) asparagine). LDL-receptor class B repeat units follow at residues 3055 to 3098, 3099 to 3141, 3142 to 3185, 3186 to 3224, and 3225 to 3268; these read EFIY…DWIG, KNLY…DPQA, GYLY…DYVN, RRLYWADENHIEFSNMDGSHRHKVPNQDIPGVIALTLFE, and DYIY…HSYR. The N-linked (GlcNAc...) asparagine glycan is linked to N3164. The 42-residue stretch at 3273–3314 folds into the EGF-like 13 domain; that stretch reads SKHLCMINNGGCSHLCLLAPGKTHTCACPTNFYLAADNRTCL. N3310 and N3316 each carry an N-linked (GlcNAc...) asparagine glycan. LDL-receptor class A domains are found at residues 3316-3353, 3356-3392, 3395-3432, 3435-3472, 3475-3511, 3514-3550, 3552-3588, 3593-3629, 3631-3668, 3673-3711, 3714-3752, and 3761-3797; these read NCTASQFRCKTDKCIPFWWKCDTVDDCGDGSDEPDDCP, RCQPGRFQCGTGLCALPAFICDGENDCGDNSDELNCD, VCLSGQFKCTKNQKCIPVNLRCNGQDDCGDEEDERDCP, SCSPDYFQCKTTKHCISKLWVCDEDPDCADASDEANCD, TCGPHEFQCKNNNCIPDHWRCDSQNDCSDNSDEENCK, TCTLKDFLCANGDCVSSRFWCDGDFDCADGSDERNCE, SCSKDQFRCSNGQCIPAKWKCDGHEDCKYGEDEKSCE, TCSSREYICASDGCISASLKCNGEYDCADGSDEMDCV, ECKEDQFRCKNKAHCIPIRWLCDGIHDCVDGSDEENCE, ICRADEFLCNNSLCKLHFWVCDGEDDCGDNSDEAPDMCV, LCPSTRPHRCRNNRICLQSEQMCNGIDECGDNSDEDHCG, and PCKKDEFACSNKKCIPMDLQCDRLDDCGDGSDEQGCR. Cystine bridges form between C3317-C3329, C3324-C3342, C3336-C3352, C3357-C3369, C3364-C3382, C3376-C3391, C3396-C3409, C3403-C3422, C3416-C3431, C3436-C3449, C3443-C3462, C3456-C3471, C3476-C3488, C3483-C3501, C3495-C3510, C3515-C3527, C3522-C3540, C3534-C3549, C3553-C3565, C3560-C3578, C3572-C3587, C3594-C3606, C3601-C3619, C3613-C3628, C3632-C3645, C3639-C3658, C3652-C3667, C3674-C3686, C3681-C3699, C3693-C3710, C3715-C3729, C3723-C3742, C3736-C3751, C3762-C3774, C3769-C3787, C3781-C3796, C3805-C3818, C3812-C3827, C3829-C3842, C3848-C3858, C3854-C3867, and C3869-C3880. A glycan (N-linked (GlcNAc...) asparagine) is linked at N3682. EGF-like domains lie at 3801–3843 and 3844–3881; these read TEYT…RQCE and DLNECLVFGTCSHQCINVEGSYKCVCDQNFQERNNTCI. N3877, N3894, and N3906 each carry an N-linked (GlcNAc...) asparagine glycan. LDL-receptor class B repeat units follow at residues 3933-3980, 3981-4038, 4039-4082, and 4083-4127; these read DMII…DWVA, GNIY…NPKR, GMMY…DYFS, and ERIY…FEDY. N-linked (GlcNAc...) asparagine glycosylation is present at N4017. EGF-like domains are found at residues 4171–4208, 4213–4249, 4249–4285, 4285–4321, 4321–4357, 4357–4392, and 4390–4427; these read DLPNPCLDLACEFLCLLNPSGATCVCPEGKYLINGTCN, LDDSCKLTCENGGRCILNEKGDLRCHCWPSYSGERCE, EVNHCSNYCQNGGTCVPSVLGRPTCSCALGFTGPNCG, GKTVCEDFCQNGGTCIVTAGNQPYCHCQPEYTGDRCQ, QYYVCHHYCVNSESCTIGDDGSVECVCPTRYEGPKCE, EVDKCVRCHGGHCIINKDSEDIFCNCTNGKIASSCQ, and SCQLCDGYCYNGGTCQLDPETNVPVCLCSTNWSGTQCE. N4204 carries N-linked (GlcNAc...) asparagine glycosylation. Cystine bridges form between C4217–C4227, C4221–C4237, C4253–C4263, C4257–C4273, C4275–C4284, C4289–C4299, C4293–C4309, C4311–C4320, C4325–C4335, C4329–C4345, and C4347–C4356. N4381 carries N-linked (GlcNAc...) asparagine glycosylation. Disulfide bonds link C4394–C4404, C4398–C4415, and C4417–C4426. N4420 carries N-linked (GlcNAc...) asparagine glycosylation. The chain crosses the membrane as a helical span at residues 4445-4467; it reads AIIVPLVLLVTLITTLVIGLVLC. Residues 4468-4599 are Cytoplasmic-facing; the sequence is KRKRRTKTIR…IEIGIRETVA (132 aa). 2 short sequence motifs (endocytosis signal) span residues 4492–4495 and 4559–4562; these read NPSY and NPVY.

Belongs to the LDLR family. In terms of assembly, binds LRPAP1, PLAU, PLAT and SERPINE1; binding is followed by internalization and degradation of the ligands. As to expression, expressed in thyroid gland and in salivary gland, as well as in adult and fetal brain.

The protein resides in the membrane. Potential cell surface proteins that bind and internalize ligands in the process of receptor-mediated endocytosis. This chain is Low-density lipoprotein receptor-related protein 1B (LRP1B), found in Homo sapiens (Human).